Consider the following 161-residue polypeptide: Nucleotide-binding protein Pnec_0318 (161 aa).

This sequence belongs to the YajQ family.

Functionally, nucleotide-binding protein. The polypeptide is Nucleotide-binding protein Pnec_0318 (Polynucleobacter necessarius subsp. necessarius (strain STIR1)).